The primary structure comprises 437 residues: MASPSSFTYYCPPSSSPVWSEPLYSLRPEHARERLQDDSVETVTSIEQAKVEEKIQEVFSSYKFNHLVPRLVLQREKHFHYLKRGLRQLTDAYECLDASRPWLCYWILHSLELLDEPIPQIVATDVCQFLELCQSPEGGFGGGPGQYPHLAPTYAAVNALCIIGTEEAYDIINREKLLQYLYSLKQPDGSFLMHVGGEVDVRSAYCAASVASLTNIITPDLFEGTAEWIARCQNWEGGIGGVPGMEAHGGYTFCGLAALVILKRERSLNLKSLLQWVTSRQMRFEGGFQGRCNKLVDGCYSFWQAGLLPLLHRALHAQGDPALSMSHWMFHQQALQEYILMCCQCPAGGLLDKPGKSRDFYHTCYCLSGLSIAQHFGSGAMLHDVVLGVPENALQPTHPVYNIGPDKVIQATTYFLQKPVPGFEELKDETSAEPATD.

PFTB repeat units lie at residues 123–164 (ATDV…CIIG), 174–215 (REKL…SLTN), 222–263 (FEGT…VILK), 270–312 (LKSL…PLLH), and 332–374 (QQAL…SIAQ). (2E,6E)-farnesyl diphosphate-binding positions include 248 to 251 (HGGY) and 291 to 294 (RCNK). 2 residues coordinate Zn(2+): Asp297 and Cys299. 300 to 303 (YSFW) is a (2E,6E)-farnesyl diphosphate binding site. His362 is a Zn(2+) binding site. A Phosphothreonine modification is found at Thr436.

This sequence belongs to the protein prenyltransferase subunit beta family. As to quaternary structure, heterodimer of FNTA and FNTB. Zn(2+) is required as a cofactor.

It carries out the reaction L-cysteinyl-[protein] + (2E,6E)-farnesyl diphosphate = S-(2E,6E)-farnesyl-L-cysteinyl-[protein] + diphosphate. Functionally, essential subunit of the farnesyltransferase complex. Catalyzes the transfer of a farnesyl moiety from farnesyl diphosphate to a cysteine at the fourth position from the C-terminus of several proteins having the C-terminal sequence Cys-aliphatic-aliphatic-X. The chain is Protein farnesyltransferase subunit beta (FNTB) from Homo sapiens (Human).